The following is a 171-amino-acid chain: Actin-related protein 2/3 complex subunit 4 (171 aa).

The protein belongs to the ARPC4 family. As to quaternary structure, component of the Arp2/3 complex composed of ARP2, ARP3, ARC40/p41-ARC, ARC35/p34-ARC, ARC18/p21-ARC, ARC19/p20-ARC and ARC16/p16-ARC.

It localises to the cytoplasm. The protein resides in the cytoskeleton. It is found in the actin patch. Functionally, functions as actin-binding component of the Arp2/3 complex which is involved in regulation of actin polymerization and together with an activating nucleation-promoting factor (NPF) mediates the formation of branched actin networks. Seems to contact the mother actin filament. The sequence is that of Actin-related protein 2/3 complex subunit 4 (ARC19) from Saccharomyces cerevisiae (strain ATCC 204508 / S288c) (Baker's yeast).